Reading from the N-terminus, the 109-residue chain is Large ribosomal subunit protein uL22 (109 aa).

It belongs to the universal ribosomal protein uL22 family. Part of the 50S ribosomal subunit.

Its function is as follows. This protein binds specifically to 23S rRNA; its binding is stimulated by other ribosomal proteins, e.g. L4, L17, and L20. It is important during the early stages of 50S assembly. It makes multiple contacts with different domains of the 23S rRNA in the assembled 50S subunit and ribosome. In terms of biological role, the globular domain of the protein is located near the polypeptide exit tunnel on the outside of the subunit, while an extended beta-hairpin is found that lines the wall of the exit tunnel in the center of the 70S ribosome. This chain is Large ribosomal subunit protein uL22, found in Herminiimonas arsenicoxydans.